Reading from the N-terminus, the 192-residue chain is Anthranilate synthase component 2 (192 aa).

Residues 3–192 (NILLLDNIDS…LQRVIQWTKI (190 aa)) form the Glutamine amidotransferase type-1 domain. 57-59 (GPG) contacts L-glutamine. The Nucleophile; for GATase activity role is filled by Cys84. Residues Gln88 and 134 to 135 (SL) contribute to the L-glutamine site. Residues His170 and Glu172 each act as for GATase activity in the active site.

In terms of assembly, heterotetramer consisting of two non-identical subunits: a beta subunit (TrpG) and a large alpha subunit (TrpE).

It carries out the reaction chorismate + L-glutamine = anthranilate + pyruvate + L-glutamate + H(+). It functions in the pathway amino-acid biosynthesis; L-tryptophan biosynthesis; L-tryptophan from chorismate: step 1/5. In terms of biological role, part of a heterotetrameric complex that catalyzes the two-step biosynthesis of anthranilate, an intermediate in the biosynthesis of L-tryptophan. In the first step, the glutamine-binding beta subunit (TrpG) of anthranilate synthase (AS) provides the glutamine amidotransferase activity which generates ammonia as a substrate that, along with chorismate, is used in the second step, catalyzed by the large alpha subunit of AS (TrpE) to produce anthranilate. In the absence of TrpG, TrpE can synthesize anthranilate directly from chorismate and high concentrations of ammonia. This chain is Anthranilate synthase component 2 (trpG), found in Buchnera aphidicola subsp. Baizongia pistaciae (strain Bp).